A 619-amino-acid chain; its full sequence is Chaperone protein HscA homolog (619 aa).

It belongs to the heat shock protein 70 family.

Its function is as follows. Chaperone involved in the maturation of iron-sulfur cluster-containing proteins. Has a low intrinsic ATPase activity which is markedly stimulated by HscB. This chain is Chaperone protein HscA homolog, found in Acinetobacter baumannii (strain ACICU).